A 362-amino-acid chain; its full sequence is Chorismate synthase (362 aa).

Arg47 lines the NADP(+) pocket. FMN-binding positions include 124 to 126, Gly286, 301 to 305, and Arg327; these read RAS and KPTAT.

The protein belongs to the chorismate synthase family. In terms of assembly, homotetramer. Requires FMNH2 as cofactor.

It catalyses the reaction 5-O-(1-carboxyvinyl)-3-phosphoshikimate = chorismate + phosphate. It functions in the pathway metabolic intermediate biosynthesis; chorismate biosynthesis; chorismate from D-erythrose 4-phosphate and phosphoenolpyruvate: step 7/7. Catalyzes the anti-1,4-elimination of the C-3 phosphate and the C-6 proR hydrogen from 5-enolpyruvylshikimate-3-phosphate (EPSP) to yield chorismate, which is the branch point compound that serves as the starting substrate for the three terminal pathways of aromatic amino acid biosynthesis. This reaction introduces a second double bond into the aromatic ring system. In Synechococcus sp. (strain WH7803), this protein is Chorismate synthase.